Reading from the N-terminus, the 302-residue chain is Glutaminase (302 aa).

Substrate is bound by residues Ser-61, Asn-111, Glu-155, Asn-162, Tyr-186, Tyr-238, and Val-256.

Belongs to the glutaminase family. As to quaternary structure, homotetramer.

It catalyses the reaction L-glutamine + H2O = L-glutamate + NH4(+). This is Glutaminase from Pseudomonas paraeruginosa (strain DSM 24068 / PA7) (Pseudomonas aeruginosa (strain PA7)).